Consider the following 140-residue polypeptide: uncharacterized protein (140 aa).

This is an uncharacterized protein from Spirochaeta aurantia.